The primary structure comprises 144 residues: Protein NrdI (144 aa).

It belongs to the NrdI family.

Functionally, probably involved in ribonucleotide reductase function. The chain is Protein NrdI from Streptococcus pyogenes serotype M4 (strain MGAS10750).